A 221-amino-acid polypeptide reads, in one-letter code: Large ribosomal subunit protein uL3 (221 aa).

This sequence belongs to the universal ribosomal protein uL3 family. In terms of assembly, part of the 50S ribosomal subunit. Forms a cluster with proteins L14 and L19.

One of the primary rRNA binding proteins, it binds directly near the 3'-end of the 23S rRNA, where it nucleates assembly of the 50S subunit. The chain is Large ribosomal subunit protein uL3 from Chlamydia trachomatis serovar L2 (strain ATCC VR-902B / DSM 19102 / 434/Bu).